The chain runs to 64 residues: Large ribosomal subunit protein bL28 (64 aa).

The protein belongs to the bacterial ribosomal protein bL28 family.

The polypeptide is Large ribosomal subunit protein bL28 (Campylobacter jejuni subsp. jejuni serotype O:6 (strain 81116 / NCTC 11828)).